We begin with the raw amino-acid sequence, 359 residues long: Transcription factor MafA (359 aa).

At Ser14 the chain carries Phosphoserine. A Glycyl lysine isopeptide (Lys-Gly) (interchain with G-Cter in SUMO2) cross-link involves residue Lys32. Disordered stretches follow at residues 40–105 (RFCH…VGGA) and 172–226 (GGGA…AGHH). A compositionally biased stretch (low complexity) spans 46 to 73 (PPGSLSSTPLSTPCSSVPSSPSFCAPSP). Phosphoserine is present on Ser49. Thr53 and Thr57 each carry phosphothreonine. Phosphoserine is present on residues Ser61 and Ser65. Residues 74 to 84 (GTGGGAGGGGS) show a composition bias toward gly residues. Basic residues predominate over residues 181-209 (GHHHGAHHTAHHHHSAHHHHHHHHHHGGS). The segment covering 210 to 224 (GHHGGGAGHGGGGAG) has biased composition (gly residues). The basic motif stretch occupies residues 260-285 (RLKQKRRTLKNRGYAQSCRFKRVQQR). The bZIP domain occupies 260–323 (RLKQKRRTLK…DLYKEKYEKL (64 aa)). A leucine-zipper region spans residues 288–309 (LESEKCQLQSQVEQLKLEVGRL). Residues 322–359 (KLAGRGGPGGAGGAGFPREPSPAQAGPGAAKGAPDFFL) form a disordered region. Residues 325–336 (GRGGPGGAGGAG) show a composition bias toward gly residues. Positions 343–359 (PAQAGPGAAKGAPDFFL) are enriched in low complexity.

This sequence belongs to the bZIP family. Maf subfamily. In terms of assembly, forms homodimers. Interacts with NEUROD1 and PDX1. May interact with MAFB, FOS, JUN and PCAF. Ubiquitinated, leading to its degradation by the proteasome. In terms of processing, phosphorylated at tyrosines. As to expression, expressed in brain, lung, spleen, pancreas and kidney. In the pancreas, expressed in the insulin-producing beta-cells of the islets of Langerhans (at protein level). Also expressed in the eye.

It is found in the nucleus. Its function is as follows. Transcriptional factor that activates insulin gene expression. Acts synergistically with NEUROD1/BETA2 and PDX1. Binds the insulin enhancer C1/RIPE3b element. Binds to consensus TRE-type MARE 5'-TGCTGACTCAGCA-3' DNA sequence. This chain is Transcription factor MafA (Mafa), found in Mus musculus (Mouse).